A 92-amino-acid chain; its full sequence is Small ribosomal subunit protein bS18 (92 aa).

Residues 1–28 (MTQQGNSGERKPRGKGPKRPRKPKVDPF) form a disordered region. Over residues 12-22 (PRGKGPKRPRK) the composition is skewed to basic residues.

The protein belongs to the bacterial ribosomal protein bS18 family. As to quaternary structure, part of the 30S ribosomal subunit. Forms a tight heterodimer with protein bS6.

Binds as a heterodimer with protein bS6 to the central domain of the 16S rRNA, where it helps stabilize the platform of the 30S subunit. The polypeptide is Small ribosomal subunit protein bS18 (Deinococcus radiodurans (strain ATCC 13939 / DSM 20539 / JCM 16871 / CCUG 27074 / LMG 4051 / NBRC 15346 / NCIMB 9279 / VKM B-1422 / R1)).